The sequence spans 90 residues: Defensin-like protein 193 (90 aa).

Residues 1-27 (MAMKSVSTLAVFAILFLVIVEMPEIKA) form the signal peptide. 4 disulfide bridges follow: Cys32–Cys86, Cys45–Cys69, Cys54–Cys81, and Cys58–Cys83.

This sequence belongs to the DEFL family. Protease inhibitor I18 (RTI/MTI-2) subfamily.

The protein resides in the secreted. This Arabidopsis thaliana (Mouse-ear cress) protein is Defensin-like protein 193 (ATTI2).